Here is a 610-residue protein sequence, read N- to C-terminus: Zinc metalloproteinase-disintegrin-like halysase (610 aa).

Positions 1-20 (MIQVLLVTICLAVFPYQGSS) are cleaved as a signal peptide. The propeptide occupies 21 to 182 (IILESGNVND…WESYEPIKKA (162 aa)). The region spanning 199-395 (KYVKLVMVAD…DMPQCILKKP (197 aa)) is the Peptidase M12B domain. An N-linked (GlcNAc...) asparagine glycan is attached at Asn218. 3 cysteine pairs are disulfide-bonded: Cys310–Cys390, Cys350–Cys374, and Cys352–Cys357. Zn(2+) is bound at residue His335. Glu336 is an active-site residue. The Zn(2+) site is built by His339 and His345. The Disintegrin domain maps to 403 to 488 (PPVCGNYFVE…AECTDRFQRN (86 aa)). Ca(2+) contacts are provided by Val405, Asn408, Phe410, Glu412, Glu415, and Asp418. 14 disulfides stabilise this stretch: Cys406-Cys435, Cys417-Cys430, Cys419-Cys425, Cys429-Cys452, Cys443-Cys449, Cys448-Cys474, Cys461-Cys481, Cys468-Cys499, Cys492-Cys504, Cys511-Cys561, Cys526-Cys572, Cys539-Cys549, Cys556-Cys598, and Cys592-Cys603. The D/ECD-tripeptide motif lies at 467-469 (ECD).

Belongs to the venom metalloproteinase (M12B) family. P-III subfamily. P-IIIa sub-subfamily. Monomer. Requires Zn(2+) as cofactor. Expressed by the venom gland.

It localises to the secreted. Inhibited by EDTA and EGTA. Not inhibited by PMSF, antipain, pepstatin, and iodoacetamide. Strongly inhibits the collagen-induced human platelet aggregation (inhibition of alpha-2/beta-1 (ITGA2/ITGB1) integrin). Hydrolyzes the Aalpha-chain of fibrinogen, without cleavage of Bbeta- and gamma-chains. Degrades type IV collagen (but not types I, II and V), fibronectin and vitronectin and also integrins alpha-1/beta-1 (ITGA1/ITGB1) and alpha-5/beta/1 (ITGA5/ITGB1) (but not alpha-V/beta-3 (ITGAV/ITGB3) and alpha-V/beta-5 (ITGAV/ITGB5) integrins). Both metalloproteinase (peptidase M12B) and disintegrin-like domains (recombinantly expressed and named halydin) play characteristic roles to inhibit human platelet aggregation. Induces apoptosis and strongly inhibits proliferation of endothelial cells as well as adhesion of the cells to extracellular matrix proteins. The apoptosis is closely associated with activation of caspase-3 and decreased level of Bcl-X(L)/Bax. Apohalysase, which lacks metalloprotease activity, is also able to induce the apoptosis. Cleaves insulin B chain at '34-His-|-Leu-35', '37-Glu-|-Ala-38', '38-Ala-|-Leu-39', '39-Leu-|-Tyr-40', '40-Tyr-|-Leu-41', '47-Gly-|-Phe-48' and '48-Phe-|-Phe-49' bonds. The polypeptide is Zinc metalloproteinase-disintegrin-like halysase (Gloydius halys (Chinese water mocassin)).